The primary structure comprises 327 residues: Zinc transport protein ZntB (327 aa).

The Cytoplasmic segment spans residues 1-273 (MEAIKGSDVN…ARRTYTMSLM (273 aa)). The chain crosses the membrane as a helical span at residues 274 to 294 (AMVFLPSTFLTGLFGVNLGGI). Over 295–300 (PGGGWQ) the chain is Periplasmic. Residues 301–321 (FGFSIFCILLVVLIGGVALWL) traverse the membrane as a helical segment. Over 322–327 (YRSKWL) the chain is Cytoplasmic.

This sequence belongs to the CorA metal ion transporter (MIT) (TC 1.A.35) family.

It is found in the cell inner membrane. It carries out the reaction Zn(2+)(out) + H(+)(out) = Zn(2+)(in) + H(+)(in). Zinc transporter. Acts as a Zn(2+):proton symporter, which likely mediates zinc ion uptake. The chain is Zinc transport protein ZntB from Shigella flexneri serotype 5b (strain 8401).